The primary structure comprises 364 residues: Capsular polysaccharide phosphotransferase cps1A (364 aa).

The protein belongs to the stealth family.

Functionally, part of a capsular polysaccharide synthesis locus. The protein is Capsular polysaccharide phosphotransferase cps1A (cps1A) of Actinobacillus pleuropneumoniae (Haemophilus pleuropneumoniae).